A 188-amino-acid chain; its full sequence is ATP synthase subunit delta (188 aa).

The protein belongs to the ATPase delta chain family. F-type ATPases have 2 components, F(1) - the catalytic core - and F(0) - the membrane proton channel. F(1) has five subunits: alpha(3), beta(3), gamma(1), delta(1), epsilon(1). F(0) has three main subunits: a(1), b(2) and c(10-14). The alpha and beta chains form an alternating ring which encloses part of the gamma chain. F(1) is attached to F(0) by a central stalk formed by the gamma and epsilon chains, while a peripheral stalk is formed by the delta and b chains.

The protein localises to the cell inner membrane. Its function is as follows. F(1)F(0) ATP synthase produces ATP from ADP in the presence of a proton or sodium gradient. F-type ATPases consist of two structural domains, F(1) containing the extramembraneous catalytic core and F(0) containing the membrane proton channel, linked together by a central stalk and a peripheral stalk. During catalysis, ATP synthesis in the catalytic domain of F(1) is coupled via a rotary mechanism of the central stalk subunits to proton translocation. Functionally, this protein is part of the stalk that links CF(0) to CF(1). It either transmits conformational changes from CF(0) to CF(1) or is implicated in proton conduction. In Sinorhizobium medicae (strain WSM419) (Ensifer medicae), this protein is ATP synthase subunit delta.